We begin with the raw amino-acid sequence, 376 residues long: Dihydroorotate dehydrogenase (quinone) (376 aa).

Residues Ala-78–Lys-82 and Thr-102 each bind FMN. Lys-82 contributes to the substrate binding site. Asn-127 to Phe-131 provides a ligand contact to substrate. Asn-157 and Asn-190 together coordinate FMN. Position 190 (Asn-190) interacts with substrate. The active-site Nucleophile is the Ser-193. Substrate is bound at residue Asn-195. FMN contacts are provided by Lys-228 and Thr-256. Asn-257–Thr-258 lines the substrate pocket. Residues Gly-286, Gly-315, and Tyr-336–Thr-337 each bind FMN.

The protein belongs to the dihydroorotate dehydrogenase family. Type 2 subfamily. As to quaternary structure, monomer. The cofactor is FMN.

The protein localises to the cell membrane. It carries out the reaction (S)-dihydroorotate + a quinone = orotate + a quinol. It participates in pyrimidine metabolism; UMP biosynthesis via de novo pathway; orotate from (S)-dihydroorotate (quinone route): step 1/1. Functionally, catalyzes the conversion of dihydroorotate to orotate with quinone as electron acceptor. The polypeptide is Dihydroorotate dehydrogenase (quinone) (Trichormus variabilis (strain ATCC 29413 / PCC 7937) (Anabaena variabilis)).